Consider the following 379-residue polypeptide: Homoserine O-succinyltransferase (379 aa).

An AB hydrolase-1 domain is found at 51-360 (NAVLICHALS…DAPQGHDAFL (310 aa)). The active-site Nucleophile is serine 157. Arginine 227 is a substrate binding site. Catalysis depends on residues aspartate 323 and histidine 356. Substrate is bound at residue aspartate 357.

This sequence belongs to the AB hydrolase superfamily. MetX family. As to quaternary structure, homodimer.

The protein localises to the cytoplasm. The enzyme catalyses L-homoserine + succinyl-CoA = O-succinyl-L-homoserine + CoA. It functions in the pathway amino-acid biosynthesis; L-methionine biosynthesis via de novo pathway; O-succinyl-L-homoserine from L-homoserine: step 1/1. Functionally, transfers a succinyl group from succinyl-CoA to L-homoserine, forming succinyl-L-homoserine. This Pseudomonas paraeruginosa (strain DSM 24068 / PA7) (Pseudomonas aeruginosa (strain PA7)) protein is Homoserine O-succinyltransferase.